We begin with the raw amino-acid sequence, 191 residues long: Elongation factor P (191 aa).

The protein belongs to the elongation factor P family.

The protein localises to the cytoplasm. It participates in protein biosynthesis; polypeptide chain elongation. Involved in peptide bond synthesis. Stimulates efficient translation and peptide-bond synthesis on native or reconstituted 70S ribosomes in vitro. Probably functions indirectly by altering the affinity of the ribosome for aminoacyl-tRNA, thus increasing their reactivity as acceptors for peptidyl transferase. The sequence is that of Elongation factor P from Bartonella tribocorum (strain CIP 105476 / IBS 506).